A 156-amino-acid chain; its full sequence is Calmodulin (156 aa).

S2 is modified (N-acetylserine). EF-hand domains lie at 15–50 (EQIAEFKEAFSLFDKDGDGTITTKELGTVMRSLGQN), 51–86 (PTEAELQDMINEVDADGNGTIDFPEFLTMMARKMKD), 88–123 (DSEEEIREAFRVFDKDGNGFISAAELRHVMTNLGEK), and 124–156 (LTDEEVDEMIREADIDGDGQVNYEEFVTMMTSK). The Ca(2+) site is built by D28, D30, D32, T34, E39, D64, D66, N68, T70, E75, D101, D103, N105, and E112. N6,N6,N6-trimethyllysine is present on K123. Ca(2+)-binding residues include D137, D139, D141, Q143, and E148.

Belongs to the calmodulin family.

Its function is as follows. Calmodulin mediates the control of a large number of enzymes, ion channels and other proteins by Ca(2+). Among the enzymes to be stimulated by the calmodulin-Ca(2+) complex are a number of protein kinases and phosphatases. The sequence is that of Calmodulin from Strongylocentrotus intermedius (Sea urchin).